Reading from the N-terminus, the 2528-residue chain is Squalestatin tetraketide synthase clz2 (2528 aa).

A Ketosynthase family 3 (KS3) domain is found at 14 to 409 (TVPIAIVGMS…GANAHVILES (396 aa)). Active-site for beta-ketoacyl synthase activity residues include C187, H291, and H331. The interval 420–457 (VNGHHQKNGTTNGHKGANGTTNELNGTNGTANGHDITT) is disordered. Over residues 436 to 452 (ANGTTNELNGTNGTANG) the composition is skewed to low complexity. A malonyl-CoA:ACP transacylase (MAT) domain region spans residues 538 to 856 (GAQWFAMGRE…PYLSCLLRGQ (319 aa)). The tract at residues 925-1063 (HDLLGSLIPG…GRIAIELDTS (139 aa)) is N-terminal hotdog fold. The 315-residue stretch at 925-1239 (HDLLGSLIPG…NQSVGQIALQ (315 aa)) folds into the PKS/mFAS DH domain. The dehydratase (DH) domain stretch occupies residues 925 to 1239 (HDLLGSLIPG…NQSVGQIALQ (315 aa)). The active-site Proton acceptor; for dehydratase activity is the H957. The interval 1083–1239 (TRSVDPSNLY…NQSVGQIALQ (157 aa)) is C-terminal hotdog fold. Residue D1148 is the Proton donor; for dehydratase activity of the active site. A methyltransferase (CMet) domain region spans residues 1390–1590 (LYRYYTDAIK…GLDVELRDCD (201 aa)). An enoyl reductase (ER) (ER) domain region spans residues 1817–2130 (GLIDTLQFSK…AGKHMGKIVI (314 aa)). Residues 2153–2331 (ASYLIVGGLG…AVSIDLGMVQ (179 aa)) form a ketoreductase (KR) domain region. The disordered stretch occupies residues 2408–2430 (RARDAKEQSNSQGGGTDSKISPG). A Carrier domain is found at 2441–2518 (EAIDVVGRAI…ALATTVATKS (78 aa)). S2478 carries the post-translational modification O-(pantetheine 4'-phosphoryl)serine.

It participates in secondary metabolite biosynthesis. In terms of biological role, highly reducing polyketide synthase (HR-PKS); part of the gene cluster that mediates the biosynthesis of squalestatin S1 (SQS1, also known as zaragozic acid A), a heavily oxidized fungal polyketide that offers potent cholesterol lowering activity by targeting squalene synthase (SS). SQS1 is composed of a 2,8-dioxobicyclic[3.2.1]octane-3,4,5-tricarboxyclic acid core that is connected to two lipophilic polyketide arms. These initial steps feature the priming of an unusual benzoic acid starter unit onto the highly reducing polyketide synthase clz14, followed by oxaloacetate extension and product release to generate a tricarboxylic acid containing product. The phenylalanine ammonia lyase (PAL) clz10 and the acyl-CoA ligase clz12 are involved in transforming phenylalanine into benzoyl-CoA. The citrate synthase-like protein clz17 is involved in connecting the C-alpha-carbons of the hexaketide chain and oxaloacetate to afford the tricarboxylic acid unit. The potential hydrolytic enzymes, clz11 and clz13, are in close proximity to pks2 and may participate in product release. On the other side, the tetraketide arm is synthesized by a the squalestatin tetraketide synthase clz2 and enzymatically esterified to the core in the last biosynthetic step, by the acetyltransferase clz6. The biosynthesis of the tetraketide must involve 3 rounds of chain extension. After the first and second rounds methyl-transfer occurs, and in all rounds of extension the ketoreductase and dehydratase are active. The enoyl reductase and C-MeT of clz2 are not active in the final round of extension. The acetyltransferase clz6 appears to have a broad substrate selectivity for its acyl CoA substrate, allowing the in vitro synthesis of novel squalestatins. The biosynthesis of SQS1 requires several oxidative steps likely performed by oxidoreductases clz3, clz15 and clz16. Finally, in support of the identification of the cluster as being responsible for SQS1 production, the cluster contains a gene encoding a putative squalene synthase (SS) clz20, suggesting a likely mechanism for self-resistance. This is Squalestatin tetraketide synthase clz2 from Cochliobolus lunatus (Filamentous fungus).